The primary structure comprises 97 residues: Ataxin-7-like protein 3B (97 aa).

Residues 76 to 97 (SLPGDPGDGPQTELQRSPPEFQ) form a disordered region. Phosphoserine is present on Ser-92.

Belongs to the SGF11 family. Interacts strongly with ENY2. Interacts weakly with USP22.

The protein localises to the cytoplasm. In terms of biological role, by binding to ENY2, interferes with the nuclear functions of the deubiquitinase (DUB) module of the SAGA complex which consists of ENY2, ATXN7, ATXN7L3 and the histone deubiquitinating component USP22. Affects USP22 DUB activity toward histones indirectly by changing the subcellular distribution of ENY2 and altering ENY2 availability for ATXN7L3 interaction. Regulates H2B monoubiquitination (H2Bub1) levels through cytoplasmic sequestration of ENY2 resulting in loss of nuclear ENY2-ATXN7L3 association which destabilizes ATXN7L3. Affects protein expression levels of ENY2 and ATXN7L3. The protein is Ataxin-7-like protein 3B (Atxn7l3b) of Mus musculus (Mouse).